The chain runs to 264 residues: MRGVLVTLAVLFLTGTQARSFWQHDDPQTPLDRIRDMLDVYLETVKASGKDAISQFESSAVGKQLDLKLADNLDTLSAAAAKLREDMTPYYREVREMWLKDTEALRAELTKDLEEVKEKIRPFLDQFSAKWTEEVEQYRQRLAPVAQELKDLTKQKVELMQAKLTPVAEEVRDRLREQVEELRKNLAPYSSELRQKLSQKLEEIRERGIPQASEYQAKVVEQLSNLREKMTPLVQEFKERLTPYAENLKNRLIDLLDEVQKTMA.

The signal sequence occupies residues 1-18; sequence MRGVLVTLAVLFLTGTQA. 2 tandem repeats follow at residues 67–88 and 89–110. The tract at residues 67 to 264 is 10 X approximate tandem repeats; that stretch reads LKLADNLDTL…LLDEVQKTMA (198 aa). The stretch at 111-121 is one 3; half-length repeat; it reads KDLEEVKEKIR. Tandem repeats lie at residues 122-143, 144-165, 166-187, 188-209, and 210-231. The 9; half-length repeat unit spans residues 232-242; the sequence is PLVQEFKERLT. The stretch at 243–264 is repeat 10; it reads PYAENLKNRLIDLLDEVQKTMA.

This sequence belongs to the apolipoprotein A1/A4/E family. Major protein of VLDL, HDL, LDL and in chylomicrons. Expressed in a number of tissues including liver, small intestine, lung, kidney, heart and muscle with highest expression in liver and small intestine.

It is found in the secreted. Functionally, participates in the reverse transport of cholesterol from tissues to the liver for excretion by promoting cholesterol efflux from tissues and by acting as a cofactor for the lecithin cholesterol acyltransferase (LCAT). This Coturnix japonica (Japanese quail) protein is Apolipoprotein A-I (APOA1).